A 123-amino-acid chain; its full sequence is Protein Wnt-7b (123 aa).

Ser-1 carries O-palmitoleoyl serine; by PORCN lipidation. A disordered linker region spans residues Val-33–Thr-61. An intrachain disulfide couples Cys-89 to Cys-104. Asn-90 carries N-linked (GlcNAc...) asparagine glycosylation.

Belongs to the Wnt family. Palmitoleoylation is required for efficient binding to frizzled receptors. Depalmitoleoylation leads to Wnt signaling pathway inhibition.

The protein resides in the secreted. The protein localises to the extracellular space. Its subcellular location is the extracellular matrix. In terms of biological role, ligand for members of the frizzled family of seven transmembrane receptors that functions in the canonical Wnt/beta-catenin signaling pathway. Required for normal fusion of the chorion and the allantois during placenta development. Required for central nervous system (CNS) angiogenesis and blood-brain barrier regulation. The polypeptide is Protein Wnt-7b (WNT-7B) (Alopias vulpinus (Common thresher shark)).